The sequence spans 173 residues: Mesencephalic astrocyte-derived neurotrophic factor homolog (173 aa).

Positions methionine 1 to alanine 22 are cleaved as a signal peptide. Disulfide bonds link cysteine 28/cysteine 114, cysteine 31/cysteine 103, cysteine 61/cysteine 72, and cysteine 148/cysteine 151.

It belongs to the ARMET family.

It is found in the secreted. In terms of biological role, required during the maturation of the embryonic nervous system for maintenance of neuronal and cuticular connectivity. Essential for maintenance of dopaminergic neurons and dopamine levels. This Drosophila erecta (Fruit fly) protein is Mesencephalic astrocyte-derived neurotrophic factor homolog.